Consider the following 134-residue polypeptide: Small ribosomal subunit protein uS8c (134 aa).

It belongs to the universal ribosomal protein uS8 family. As to quaternary structure, part of the 30S ribosomal subunit.

It localises to the plastid. Its subcellular location is the chloroplast. One of the primary rRNA binding proteins, it binds directly to 16S rRNA central domain where it helps coordinate assembly of the platform of the 30S subunit. The sequence is that of Small ribosomal subunit protein uS8c (rps8) from Nicotiana tomentosiformis (Tobacco).